The chain runs to 86 residues: YcgL domain-containing protein XOO0428 (86 aa).

The YcgL domain occupies 1–83; the sequence is MHAYVYKSQR…PKTRVLAGEC (83 aa).

This is YcgL domain-containing protein XOO0428 from Xanthomonas oryzae pv. oryzae (strain MAFF 311018).